Reading from the N-terminus, the 1040-residue chain is MGTATRRKPHLLLVAAVALVSSSAWSSALGSQTTFGPVFEDQPLSVLFPEESTEEQVLLACRARASPPATYRWKMNGTEMKLEPGSRHQLVGGNLVIMNPTKAQDAGVYQCLASNPVGTVVSREAILRFGFLQEFSKEERDPVKAHEGWGVMLPCNPPAHYPGLSYRWLLNEFPNFIPTDGRHFVSQTTGNLYIARTNASDLGNYSCLATSHMDFSTKSVFSKFAQLNLAAEDTRLFAPSIKARFPAETYALVGQQVTLECFAFGNPVPRIKWRKVDGSLSPQWTTAEPTLQIPSVSFEDEGTYECEAENSKGRDTVQGRIIVQAQPEWLKVISDTEADIGSNLRWGCAAAGKPRPTVRWLRNGEPLASQNRVEVLAGDLRFSKLSLEDSGMYQCVAENKHGTIYASAELAVQALAPDFRLNPVRRLIPAARGGEILIPCQPRAAPKAVVLWSKGTEILVNSSRVTVTPDGTLIIRNISRSDEGKYTCFAENFMGKANSTGILSVRDATKITLAPSSADINLGDNLTLQCHASHDPTMDLTFTWTLDDFPIDFDKPGGHYRRTNVKETIGDLTILNAQLRHGGKYTCMAQTVVDSASKEATVLVRGPPGPPGGVVVRDIGDTTIQLSWSRGFDNHSPIAKYTLQARTPPAGKWKQVRTNPANIEGNAETAQVLGLTPWMDYEFRVIASNILGTGEPSGPSSKIRTREAAPSVAPSGLSGGGGAPGELIVNWTPMSREYQNGDGFGYLLSFRRQGSTHWQTARVPGADAQYFVYSNESVRPYTPFEVKIRSYNRRGDGPESLTALVYSAEEEPRVAPTKVWAKGVSSSEMNVTWEPVQQDMNGILLGYEIRYWKAGDKEAAADRVRTAGLDTSARVSGLHPNTKYHVTVRAYNRAGTGPASPSANATTMKPPPRRPPGNISWTFSSSSLSIKWDPVVPFRNESAVTGYKMLYQNDLHLTPTLHLTGKNWIEIPVPEDIGHALVQIRTTGPGGDGIPAEVHIVRNGGTSMMVENMAVRPAPHPGTVISHSVAMLILIGSLEL.

A signal peptide spans 1-30; it reads MGTATRRKPHLLLVAAVALVSSSAWSSALG. 6 Ig-like C2-type domains span residues 43–128, 133–222, 239–322, 327–411, 417–504, and 509–603; these read PLSV…AILR, QEFS…SVFS, PSIK…GRII, PEWL…AELA, PDFR…GILS, and TKIT…ATVL. Intrachain disulfides connect Cys61–Cys111, Cys155–Cys207, Cys261–Cys306, and Cys348–Cys395. Asn76, Asn198, and Asn204 each carry an N-linked (GlcNAc...) asparagine glycan. N-linked (GlcNAc...) asparagine glycosylation is found at Asn461, Asn477, Asn498, and Asn525. Fibronectin type-III domains lie at 610 to 708, 713 to 810, 815 to 910, and 915 to 1006; these read PPGG…TREA, APSG…SAEE, APTK…TMKP, and PPGN…NGGT. A disordered region spans residues 694–720; that stretch reads GEPSGPSSKIRTREAAPSVAPSGLSGG. Positions 794-796 match the Cell attachment site motif; the sequence is RGD. N-linked (GlcNAc...) asparagine glycans are attached at residues Asn830, Asn904, Asn918, and Asn940. A disordered region spans residues 894 to 919; it reads AGTGPASPSANATTMKPPPRRPPGNI. The GPI-anchor amidated asparagine moiety is linked to residue Asn1012. Positions 1013–1040 are cleaved as a propeptide — removed in mature form; it reads MAVRPAPHPGTVISHSVAMLILIGSLEL.

It belongs to the immunoglobulin superfamily. Contactin family.

It localises to the cell membrane. Functionally, in conjunction with another transmembrane protein, CNTNAP2, contributes to the organization of axonal domains at nodes of Ranvier by maintaining voltage-gated potassium channels at the juxtaparanodal region. May be involved in cell adhesion. The sequence is that of Contactin-2 (CNTN2) from Homo sapiens (Human).